Reading from the N-terminus, the 224-residue chain is Na(+)-translocating NADH-quinone reductase subunit D (224 aa).

The next 5 membrane-spanning stretches (helical) occupy residues 43 to 63 (TVMA…ISMI), 67 to 87 (IPSS…VIVV), 104 to 124 (VFVG…AFAM), 132 to 152 (FFDG…LGFV), and 179 to 199 (NGLL…IWAL).

The protein belongs to the NqrDE/RnfAE family. In terms of assembly, composed of six subunits; NqrA, NqrB, NqrC, NqrD, NqrE and NqrF.

The protein resides in the cell inner membrane. It catalyses the reaction a ubiquinone + n Na(+)(in) + NADH + H(+) = a ubiquinol + n Na(+)(out) + NAD(+). Its function is as follows. NQR complex catalyzes the reduction of ubiquinone-1 to ubiquinol by two successive reactions, coupled with the transport of Na(+) ions from the cytoplasm to the periplasm. NqrA to NqrE are probably involved in the second step, the conversion of ubisemiquinone to ubiquinol. The sequence is that of Na(+)-translocating NADH-quinone reductase subunit D from Pseudomonas aeruginosa (strain LESB58).